The following is a 269-amino-acid chain: Hydroxypyruvate/pyruvate aldolase (269 aa).

The active-site Proton acceptor is the His47. Glu151 and Asp177 together coordinate a divalent metal cation.

It belongs to the HpcH/HpaI aldolase family. Requires a divalent metal cation as cofactor.

The catalysed reaction is D-glyceraldehyde + 3-hydroxypyruvate = 2-dehydro-D-gluconate. It catalyses the reaction D-glyceraldehyde + 3-hydroxypyruvate = (3R,4S,5R)-3,4,5,6-tetrahydroxy-2-oxohexanoate. It carries out the reaction D-glyceraldehyde + 3-hydroxypyruvate = 2-dehydro-D-galactonate. The enzyme catalyses D-glyceraldehyde + pyruvate = 2-dehydro-3-deoxy-L-galactonate. The catalysed reaction is 2-dehydro-3-deoxy-D-gluconate = D-glyceraldehyde + pyruvate. Aldolase which can catalyze in vitro the aldolisation reaction between hydroxypyruvate (HPA) or pyruvate (PA) and D-glyceraldehyde (D-GA). The condensation of hydroxypyruvate and D-glyceraldehyde produces 2-dehydro-D-gluconate as the major product, (3R,4S,5R)-3,4,5,6-tetrahydroxy-2-oxohexanoate and 2-dehydro-D-galactonate. The condensation of pyruvate and D-glyceraldehyde produces 2-dehydro-3-deoxy-L-galactonate as the major product and 2-dehydro-3-deoxy-D-gluconate. In Cupriavidus necator (strain ATCC 17699 / DSM 428 / KCTC 22496 / NCIMB 10442 / H16 / Stanier 337) (Ralstonia eutropha), this protein is Hydroxypyruvate/pyruvate aldolase.